A 136-amino-acid polypeptide reads, in one-letter code: uncharacterized protein (136 aa).

This is an uncharacterized protein from Saccharomyces cerevisiae (strain ATCC 204508 / S288c) (Baker's yeast).